The sequence spans 285 residues: Phosphate import ATP-binding protein PstB (285 aa).

Residues Met-22–Phe-262 enclose the ABC transporter domain. Residue Gly-54–Thr-61 coordinates ATP. The tract at residues Arg-266–Gln-285 is disordered. The span at Asp-272–Gln-285 shows a compositional bias: polar residues.

The protein belongs to the ABC transporter superfamily. Phosphate importer (TC 3.A.1.7) family. In terms of assembly, the complex is composed of two ATP-binding proteins (PstB), two transmembrane proteins (PstC and PstA) and a solute-binding protein (PstS).

Its subcellular location is the cell membrane. The catalysed reaction is phosphate(out) + ATP + H2O = ADP + 2 phosphate(in) + H(+). Its function is as follows. Part of the ABC transporter complex PstSACB involved in phosphate import. Responsible for energy coupling to the transport system. The protein is Phosphate import ATP-binding protein PstB of Mycobacterium intracellulare.